Consider the following 96-residue polypeptide: Large ribosomal subunit protein uL15 (96 aa).

This sequence belongs to the universal ribosomal protein uL15 family. As to quaternary structure, part of the 50S ribosomal subunit.

Its function is as follows. Binds to the 23S rRNA. In Streptomyces scabiei, this protein is Large ribosomal subunit protein uL15 (rplO).